A 400-amino-acid polypeptide reads, in one-letter code: Formate-dependent phosphoribosylglycinamide formyltransferase (400 aa).

N(1)-(5-phospho-beta-D-ribosyl)glycinamide-binding positions include 22–23 (EL) and Glu-82. ATP-binding positions include Arg-115, Lys-157, 162–167 (SSGKGQ), 197–200 (EGFV), and Glu-205. The ATP-grasp domain occupies 120–315 (RLAAETLGVP…EFELHARAIL (196 aa)). The Mg(2+) site is built by Glu-274 and Glu-286. N(1)-(5-phospho-beta-D-ribosyl)glycinamide is bound by residues Asp-293, Lys-362, and 369-370 (RR).

It belongs to the PurK/PurT family. As to quaternary structure, homodimer.

The catalysed reaction is N(1)-(5-phospho-beta-D-ribosyl)glycinamide + formate + ATP = N(2)-formyl-N(1)-(5-phospho-beta-D-ribosyl)glycinamide + ADP + phosphate + H(+). Its pathway is purine metabolism; IMP biosynthesis via de novo pathway; N(2)-formyl-N(1)-(5-phospho-D-ribosyl)glycinamide from N(1)-(5-phospho-D-ribosyl)glycinamide (formate route): step 1/1. Functionally, involved in the de novo purine biosynthesis. Catalyzes the transfer of formate to 5-phospho-ribosyl-glycinamide (GAR), producing 5-phospho-ribosyl-N-formylglycinamide (FGAR). Formate is provided by PurU via hydrolysis of 10-formyl-tetrahydrofolate. This is Formate-dependent phosphoribosylglycinamide formyltransferase from Mycolicibacterium smegmatis (strain ATCC 700084 / mc(2)155) (Mycobacterium smegmatis).